Consider the following 370-residue polypeptide: GTPase Obg (370 aa).

Positions Met1–Leu159 constitute an Obg domain. Residues Leu128–Gly147 are disordered. One can recognise an OBG-type G domain in the interval Ala160–Ser334. Residues Gly166–Ser173, Phe191–Ala195, Asp213–Gly216, Asn284–Asp287, and Ser315–Leu317 each bind GTP. The Mg(2+) site is built by Ser173 and Thr193.

This sequence belongs to the TRAFAC class OBG-HflX-like GTPase superfamily. OBG GTPase family. In terms of assembly, monomer. The cofactor is Mg(2+).

The protein resides in the cytoplasm. An essential GTPase which binds GTP, GDP and possibly (p)ppGpp with moderate affinity, with high nucleotide exchange rates and a fairly low GTP hydrolysis rate. Plays a role in control of the cell cycle, stress response, ribosome biogenesis and in those bacteria that undergo differentiation, in morphogenesis control. In Burkholderia cenocepacia (strain ATCC BAA-245 / DSM 16553 / LMG 16656 / NCTC 13227 / J2315 / CF5610) (Burkholderia cepacia (strain J2315)), this protein is GTPase Obg.